The primary structure comprises 128 residues: Translation initiation factor 5A (128 aa).

At Lys-35 the chain carries Hypusine.

This sequence belongs to the eIF-5A family.

Its subcellular location is the cytoplasm. Functions by promoting the formation of the first peptide bond. This Methanosarcina barkeri (strain Fusaro / DSM 804) protein is Translation initiation factor 5A.